The chain runs to 80 residues: Cell division protein ZapB (80 aa).

Residues 3-80 (FEVLEQLESK…ALLGKMDEVE (78 aa)) are a coiled coil.

It belongs to the ZapB family. Homodimer. The ends of the coiled-coil dimer bind to each other, forming polymers. Interacts with FtsZ.

The protein resides in the cytoplasm. Non-essential, abundant cell division factor that is required for proper Z-ring formation. It is recruited early to the divisome by direct interaction with FtsZ, stimulating Z-ring assembly and thereby promoting cell division earlier in the cell cycle. Its recruitment to the Z-ring requires functional FtsA or ZipA. In Vibrio parahaemolyticus serotype O3:K6 (strain RIMD 2210633), this protein is Cell division protein ZapB.